The primary structure comprises 118 residues: Large ribosomal subunit protein uL18 (118 aa).

This sequence belongs to the universal ribosomal protein uL18 family. Part of the 50S ribosomal subunit; part of the 5S rRNA/L5/L18/L25 subcomplex. Contacts the 5S and 23S rRNAs.

Functionally, this is one of the proteins that bind and probably mediate the attachment of the 5S RNA into the large ribosomal subunit, where it forms part of the central protuberance. The polypeptide is Large ribosomal subunit protein uL18 (Zymomonas mobilis subsp. mobilis (strain ATCC 31821 / ZM4 / CP4)).